Consider the following 63-residue polypeptide: Large ribosomal subunit protein uL29 (63 aa).

It belongs to the universal ribosomal protein uL29 family.

This is Large ribosomal subunit protein uL29 from Aeromonas salmonicida (strain A449).